We begin with the raw amino-acid sequence, 428 residues long: Serine--tRNA ligase (428 aa).

231–233 (TAE) contributes to the L-serine binding site. Position 262–264 (262–264 (RSE)) interacts with ATP. Residue glutamate 285 coordinates L-serine. 349–352 (EISS) provides a ligand contact to ATP. Serine 385 contributes to the L-serine binding site.

This sequence belongs to the class-II aminoacyl-tRNA synthetase family. Type-1 seryl-tRNA synthetase subfamily. As to quaternary structure, homodimer. The tRNA molecule binds across the dimer.

It is found in the cytoplasm. The enzyme catalyses tRNA(Ser) + L-serine + ATP = L-seryl-tRNA(Ser) + AMP + diphosphate + H(+). It carries out the reaction tRNA(Sec) + L-serine + ATP = L-seryl-tRNA(Sec) + AMP + diphosphate + H(+). Its pathway is aminoacyl-tRNA biosynthesis; selenocysteinyl-tRNA(Sec) biosynthesis; L-seryl-tRNA(Sec) from L-serine and tRNA(Sec): step 1/1. Its function is as follows. Catalyzes the attachment of serine to tRNA(Ser). Is also able to aminoacylate tRNA(Sec) with serine, to form the misacylated tRNA L-seryl-tRNA(Sec), which will be further converted into selenocysteinyl-tRNA(Sec). This is Serine--tRNA ligase from Staphylococcus aureus (strain MSSA476).